The primary structure comprises 334 residues: MHDRLISGTEKPEDHFDRAIRPTSLADYIGQPVVREQMEIFIGAARGRGEALDHTLIFGPPGLGKTTLANIIAREMGGNLKSTSGPVLERAGDLAAMLTNLEEGDVLFIDEIHRLSPVIEEILYPAMEDYQLDIMIGEGPAARSIKLDLPPFTLVAATTRAGLLTSPLRDRFGIVQRLEFYSVEDLTHIVTRSANLMNVPMTSTGAAEVARRSRGTPRIANRLLRRVRDYAQVKGTGEVTHDMAQRALDMLNVDKDGLDTLDRRYLSMLLERFDGGPAGVEALAAAMAEDSGTLEDVIEPYLIQQGYVMRTARGRIATNMAYLQFGLTPPEPKN.

The tract at residues 1–181 is large ATPase domain (RuvB-L); that stretch reads MHDRLISGTE…FGIVQRLEFY (181 aa). ATP is bound by residues I20, R21, G62, K65, T66, T67, 128 to 130, R171, Y181, and R218; that span reads EDY. Residue T66 participates in Mg(2+) binding. Positions 182–252 are small ATPAse domain (RuvB-S); it reads SVEDLTHIVT…MAQRALDMLN (71 aa). Residues 255–334 are head domain (RuvB-H); the sequence is KDGLDTLDRR…FGLTPPEPKN (80 aa). Positions 310 and 315 each coordinate DNA.

It belongs to the RuvB family. Homohexamer. Forms an RuvA(8)-RuvB(12)-Holliday junction (HJ) complex. HJ DNA is sandwiched between 2 RuvA tetramers; dsDNA enters through RuvA and exits via RuvB. An RuvB hexamer assembles on each DNA strand where it exits the tetramer. Each RuvB hexamer is contacted by two RuvA subunits (via domain III) on 2 adjacent RuvB subunits; this complex drives branch migration. In the full resolvosome a probable DNA-RuvA(4)-RuvB(12)-RuvC(2) complex forms which resolves the HJ.

The protein resides in the cytoplasm. The enzyme catalyses ATP + H2O = ADP + phosphate + H(+). Its function is as follows. The RuvA-RuvB-RuvC complex processes Holliday junction (HJ) DNA during genetic recombination and DNA repair, while the RuvA-RuvB complex plays an important role in the rescue of blocked DNA replication forks via replication fork reversal (RFR). RuvA specifically binds to HJ cruciform DNA, conferring on it an open structure. The RuvB hexamer acts as an ATP-dependent pump, pulling dsDNA into and through the RuvAB complex. RuvB forms 2 homohexamers on either side of HJ DNA bound by 1 or 2 RuvA tetramers; 4 subunits per hexamer contact DNA at a time. Coordinated motions by a converter formed by DNA-disengaged RuvB subunits stimulates ATP hydrolysis and nucleotide exchange. Immobilization of the converter enables RuvB to convert the ATP-contained energy into a lever motion, pulling 2 nucleotides of DNA out of the RuvA tetramer per ATP hydrolyzed, thus driving DNA branch migration. The RuvB motors rotate together with the DNA substrate, which together with the progressing nucleotide cycle form the mechanistic basis for DNA recombination by continuous HJ branch migration. Branch migration allows RuvC to scan DNA until it finds its consensus sequence, where it cleaves and resolves cruciform DNA. The polypeptide is Holliday junction branch migration complex subunit RuvB (Acinetobacter baylyi (strain ATCC 33305 / BD413 / ADP1)).